The chain runs to 179 residues: Monothiol glutaredoxin-S12, chloroplastic (179 aa).

A chloroplast-targeting transit peptide spans 1–61 (MVAATVNLAN…WPPLRCSSVK (61 aa)). Residue Ala62 is modified to N-acetylalanine. A Glutaredoxin domain is found at 75-176 (EETVKTTVAE…AILAEANGKN (102 aa)). Residue Cys95 coordinates [2Fe-2S] cluster.

This sequence belongs to the glutaredoxin family. CPYC subfamily.

The protein localises to the plastid. Its subcellular location is the chloroplast. May only reduce GSH-thiol disulfides, but not protein disulfides. In Arabidopsis thaliana (Mouse-ear cress), this protein is Monothiol glutaredoxin-S12, chloroplastic (GRXS12).